Here is a 658-residue protein sequence, read N- to C-terminus: Non-reducing end beta-L-arabinofuranosidase (658 aa).

Beta-L-arabinofuranose-binding positions include histidine 142, 192-194, histidine 270, and glutamate 322; that span reads DGH. The active-site Proton donor/acceptor is glutamate 322. Zn(2+)-binding residues include glutamate 338, cysteine 340, cysteine 417, and cysteine 418. Cysteine 417 (nucleophile; S-glycosyl-cysteine intermediate) is an active-site residue.

The protein belongs to the glycosyl hydrolase 127 family. Homodimer in solution. It depends on Zn(2+) as a cofactor.

It carries out the reaction beta-L-arabinofuranosyl-(1-&gt;2)-beta-L-arabinofuranose + H2O = 2 beta-L-arabinofuranose. Its activity is regulated as follows. Strongly inhibited in the presence of thiol modifiers, suggesting a crucial role for cysteine residues in catalysis. Slightly inhibited by EDTA. Beta-L-arabinofuranosidase that removes the beta-L-arabinofuranose residue from the non-reducing end of various substrates, including beta-L-arabinofuranosyl-hydroxyproline (Ara-Hyp), Ara-beta-1,2-Ara-beta-Hyp (Ara(2)-Hyp), Ara-beta-1,2-Ara-beta-1,2-Ara-beta-Hyp (Ara(3)-Hyp), and beta-L-arabinofuranosyl-(1-&gt;2)-1-O-methyl-beta-L-arabinofuranose. In the presence of 1-alkanols, shows transglycosylation activity, retaining the anomeric configuration of the arabinofuranose residue. This Bifidobacterium longum subsp. longum (strain ATCC 15707 / DSM 20219 / JCM 1217 / NCTC 11818 / E194b) protein is Non-reducing end beta-L-arabinofuranosidase.